A 63-amino-acid polypeptide reads, in one-letter code: Lantipeptide Flvbeta.a (63 aa).

A propeptide spans 1–28 (cleaved by FlvT); that stretch reads MSEKNMEKAGVVKADELDEMIDETTGGA. Residues T30, T33, T38, and T39 each carry the 2,3-didehydrobutyrine; by FlvM2 modification. A cross-link (lanthionine (Ser-Cys); by FlvM2) is located at residues 43-49; sequence SKGLQNC. 2 positions are modified to 2,3-didehydrobutyrine; by FlvM2: T54 and T55.

Maturation of FlvA2 peptides involves the enzymatic conversion of Thr, and Ser into dehydrated AA and the formation of thioether bonds with cysteines. Modifications are processed by the flavecin synthetase FlvM2. This is followed by membrane translocation and cleavage of the modified precursor. Post-translationally, contains DL-lanthionine, when coepressed in E.coli with the flavecin synthetase FlvM2.

It is found in the secreted. Functionally, lanthionine-containing peptide that does probably not show antibacterial activity, since its analog [+3]Flvbeta.a does not show antibacterial activity against M.luteus. Also does not show antibiotic activity when tested with [Del2]Flvalpha.a, an analog of Flvalpha.a, which is encoded by the same operon than Flvbeta.a. The bactericidal activity of lantibiotics is based on depolarization of energized bacterial cytoplasmic membranes, initiated by the formation of aqueous transmembrane pores. The sequence is that of Lantipeptide Flvbeta.a from Ruminococcus flavefaciens.